The following is a 63-amino-acid chain: Large ribosomal subunit protein uL29 (63 aa).

The protein belongs to the universal ribosomal protein uL29 family.

The protein is Large ribosomal subunit protein uL29 of Bordetella pertussis (strain Tohama I / ATCC BAA-589 / NCTC 13251).